The sequence spans 426 residues: Lactate racemase (426 aa).

A Ni(II)-pyridinium-3,5-bisthiocarboxylate mononucleotide-binding site is contributed by 72–75; that stretch reads DHTR. Catalysis depends on proton donor/acceptor residues His-108 and His-174. 2 residues coordinate Ni(II)-pyridinium-3,5-bisthiocarboxylate mononucleotide: Lys-184 and His-200. Positions 295 and 298 each coordinate substrate.

It belongs to the lactate racemase family. Homodimer. It depends on Ni(II)-pyridinium-3,5-bisthiocarboxylate mononucleotide as a cofactor.

It catalyses the reaction (S)-lactate = (R)-lactate. Its activity is regulated as follows. Activation of the apo-enzyme requires the three accessory proteins LarB, LarE and LarC, that are involved in the biosynthesis of the nickel-pincer cofactor of LarA. In terms of biological role, catalyzes the interconversion between the D- and L-isomers of lactate. The protein is Lactate racemase of Thermoanaerobacterium thermosaccharolyticum (strain ATCC 7956 / DSM 571 / NCIMB 9385 / NCA 3814 / NCTC 13789 / WDCM 00135 / 2032) (Clostridium thermosaccharolyticum).